A 225-amino-acid chain; its full sequence is Phosphatidylserine decarboxylase proenzyme (225 aa).

The active-site Schiff-base intermediate with substrate; via pyruvic acid is Ser-182. Position 182 is a pyruvic acid (Ser); by autocatalysis (Ser-182).

The protein belongs to the phosphatidylserine decarboxylase family. PSD-A subfamily. In terms of assembly, heterodimer of a large membrane-associated beta subunit and a small pyruvoyl-containing alpha subunit. It depends on pyruvate as a cofactor. Is synthesized initially as an inactive proenzyme. Formation of the active enzyme involves a self-maturation process in which the active site pyruvoyl group is generated from an internal serine residue via an autocatalytic post-translational modification. Two non-identical subunits are generated from the proenzyme in this reaction, and the pyruvate is formed at the N-terminus of the alpha chain, which is derived from the carboxyl end of the proenzyme. The post-translation cleavage follows an unusual pathway, termed non-hydrolytic serinolysis, in which the side chain hydroxyl group of the serine supplies its oxygen atom to form the C-terminus of the beta chain, while the remainder of the serine residue undergoes an oxidative deamination to produce ammonia and the pyruvoyl prosthetic group on the alpha chain.

The protein localises to the cell membrane. The enzyme catalyses a 1,2-diacyl-sn-glycero-3-phospho-L-serine + H(+) = a 1,2-diacyl-sn-glycero-3-phosphoethanolamine + CO2. It functions in the pathway phospholipid metabolism; phosphatidylethanolamine biosynthesis; phosphatidylethanolamine from CDP-diacylglycerol: step 2/2. In terms of biological role, catalyzes the formation of phosphatidylethanolamine (PtdEtn) from phosphatidylserine (PtdSer). The protein is Phosphatidylserine decarboxylase proenzyme of Neorickettsia sennetsu (strain ATCC VR-367 / Miyayama) (Ehrlichia sennetsu).